Consider the following 1265-residue polypeptide: Protein transport protein SEC31 (1265 aa).

WD repeat units follow at residues 6-46 (EIAR…ELWD), 61-105 (TVDN…KTKD), 116-156 (KHTG…EPFA), 162-202 (TPMD…EVLH), 209-252 (GGRA…APEK), 256-296 (GHKK…KLGE), and 299-339 (TTAN…PSVS). A WD 8; interaction with SEC13 repeat occupies 380–403 (SFGFGSKLVIINTDSSGKSTVKVD). Over residues 457–480 (KESLFEDANNDEKEATSPETKKEN) the composition is skewed to basic and acidic residues. Disordered regions lie at residues 457–485 (KESLFEDANNDEKEATSPETKKENGEDDF), 765–784 (VKSSANAKIAKPASSSGQTR), and 793–1163 (PAYA…IPEN). The span at 794–810 (AYAPPVQAPPVQAPQPP) shows a compositional bias: pro residues. 5 stretches are compositionally biased toward low complexity: residues 811–824 (LVQQQQQQQQQQQP), 865–875 (TPSSLSGTTSG), 901–931 (AKTAAPRRAAAAATPPVSTPTPVSAPAFGSP), 939–951 (SQPGSVGSVSSAG), and 969–987 (SISRSTSRTTVPTSSTVPA). The span at 1004-1023 (SDASQPPSSGFASPTLNSSP) shows a compositional bias: polar residues. Pro residues-rich tracts occupy residues 1062 to 1071 (YAPPKNPYAV) and 1083 to 1101 (APPPPAPKLGSAAPPPPQP).

It belongs to the WD repeat SEC31 family. As to quaternary structure, the COPII coat is composed of at least 5 proteins: the SEC23/24 complex, the SEC13/31 complex, and the protein SAR1. SEC13 and SEC31 make a 2:2 tetramer that forms the edge element of the COPII outer coat. The tetramer self-assembles in multiple copies to form the complete polyhedral cage. Interacts (via WD 8) with SEC13.

It localises to the cytoplasmic vesicle. Its subcellular location is the COPII-coated vesicle membrane. It is found in the endoplasmic reticulum membrane. In terms of biological role, component of the coat protein complex II (COPII) which promotes the formation of transport vesicles from the endoplasmic reticulum (ER). The coat has two main functions, the physical deformation of the endoplasmic reticulum membrane into vesicles and the selection of cargo molecules. The chain is Protein transport protein SEC31 (PGA63) from Candida albicans (strain SC5314 / ATCC MYA-2876) (Yeast).